The primary structure comprises 446 residues: Gamma-glutamyl phosphate reductase (446 aa).

This sequence belongs to the gamma-glutamyl phosphate reductase family.

The protein localises to the cytoplasm. It carries out the reaction L-glutamate 5-semialdehyde + phosphate + NADP(+) = L-glutamyl 5-phosphate + NADPH + H(+). The protein operates within amino-acid biosynthesis; L-proline biosynthesis; L-glutamate 5-semialdehyde from L-glutamate: step 2/2. Catalyzes the NADPH-dependent reduction of L-glutamate 5-phosphate into L-glutamate 5-semialdehyde and phosphate. The product spontaneously undergoes cyclization to form 1-pyrroline-5-carboxylate. In Sulfurihydrogenibium sp. (strain YO3AOP1), this protein is Gamma-glutamyl phosphate reductase.